A 146-amino-acid chain; its full sequence is uncharacterized protein (146 aa).

The chain crosses the membrane as a helical span at residues 7 to 27; that stretch reads FVLSITIVLVILIIIAFIWYN.

This sequence belongs to the asfivirus E146L family.

It localises to the host membrane. Its subcellular location is the virion. This is an uncharacterized protein from Ornithodoros (relapsing fever ticks).